The following is a 252-amino-acid chain: Aspartate/glutamate leucyltransferase (252 aa).

Belongs to the R-transferase family. Bpt subfamily.

Its subcellular location is the cytoplasm. The enzyme catalyses N-terminal L-glutamyl-[protein] + L-leucyl-tRNA(Leu) = N-terminal L-leucyl-L-glutamyl-[protein] + tRNA(Leu) + H(+). It carries out the reaction N-terminal L-aspartyl-[protein] + L-leucyl-tRNA(Leu) = N-terminal L-leucyl-L-aspartyl-[protein] + tRNA(Leu) + H(+). Functionally, functions in the N-end rule pathway of protein degradation where it conjugates Leu from its aminoacyl-tRNA to the N-termini of proteins containing an N-terminal aspartate or glutamate. This Hyphomonas neptunium (strain ATCC 15444) protein is Aspartate/glutamate leucyltransferase.